Consider the following 208-residue polypeptide: Small ribosomal subunit protein uS4 (208 aa).

In terms of domain architecture, S4 RNA-binding spans 98–158 (RRLDNVVYRL…EKSRGQLRIK (61 aa)).

This sequence belongs to the universal ribosomal protein uS4 family. As to quaternary structure, part of the 30S ribosomal subunit. Contacts protein S5. The interaction surface between S4 and S5 is involved in control of translational fidelity.

Its function is as follows. One of the primary rRNA binding proteins, it binds directly to 16S rRNA where it nucleates assembly of the body of the 30S subunit. In terms of biological role, with S5 and S12 plays an important role in translational accuracy. The polypeptide is Small ribosomal subunit protein uS4 (Magnetococcus marinus (strain ATCC BAA-1437 / JCM 17883 / MC-1)).